A 210-amino-acid polypeptide reads, in one-letter code: Uracil phosphoribosyltransferase (210 aa).

5-phospho-alpha-D-ribose 1-diphosphate contacts are provided by residues arginine 80, arginine 105, and 132 to 140 (DPMLATGGS). Uracil-binding positions include isoleucine 195 and 200 to 202 (GDA). Aspartate 201 is a binding site for 5-phospho-alpha-D-ribose 1-diphosphate.

This sequence belongs to the UPRTase family. Mg(2+) is required as a cofactor.

The catalysed reaction is UMP + diphosphate = 5-phospho-alpha-D-ribose 1-diphosphate + uracil. It functions in the pathway pyrimidine metabolism; UMP biosynthesis via salvage pathway; UMP from uracil: step 1/1. Its activity is regulated as follows. Allosterically activated by GTP. Its function is as follows. Catalyzes the conversion of uracil and 5-phospho-alpha-D-ribose 1-diphosphate (PRPP) to UMP and diphosphate. The sequence is that of Uracil phosphoribosyltransferase from Caldanaerobacter subterraneus subsp. tengcongensis (strain DSM 15242 / JCM 11007 / NBRC 100824 / MB4) (Thermoanaerobacter tengcongensis).